The following is a 786-amino-acid chain: Keratin, type I cytoskeletal 9 (786 aa).

The interval 1–21 (MNCRQFLSSHCSRDSSGGGGG) is disordered. The head stretch occupies residues 1 to 136 (MNCRQFLSSH…SGAGGILGAD (136 aa)). Phosphoserine is present on serine 52. Residues 137-172 (EKTTMQDLNSRLASYLDKVQALEDANKELESKIREW) are coil 1A. One can recognise an IF rod domain in the interval 137-449 (EKTTMQDLNS…SLLEGGQEDF (313 aa)). Positions 173 to 191 (YDKQGSRTFHRDYSPYYDT) are linker 1. The coil 1B stretch occupies residues 192-283 (IEDLKNQIVN…KNHEDEMSQL (92 aa)). The linker 12 stretch occupies residues 284–306 (TGQNSGDVNVEMNAAPGRDLTKI). Residues 307 to 445 (LNDMREEYER…KTYRSLLEGG (139 aa)) form a coil 2 region. The interval 446-760 (QEDFESHESG…GGGSGSKGGS (315 aa)) is tail. Residues 447–786 (EDFESHESGQ…DDTQGYHIQY (340 aa)) form a disordered region. Composition is skewed to gly residues over residues 460–657 (GSGG…GGSG) and 664–761 (SSSG…GGSG). Residues 762-773 (RSSQVQSSSSKS) show a composition bias toward low complexity.

The protein belongs to the intermediate filament family. Heterotetramer of two type I and two type II keratins.

May serve an important special function either in the mature palmar and plantar skin tissue or in the morphogenetic program of the formation of these tissues. Plays a role in keratin filament assembly. The chain is Keratin, type I cytoskeletal 9 from Canis lupus familiaris (Dog).